Here is a 271-residue protein sequence, read N- to C-terminus: Phosphatidylglycerol--prolipoprotein diacylglyceryl transferase (271 aa).

7 consecutive transmembrane segments (helical) span residues 18–38, 60–80, 103–123, 137–157, 181–201, 209–229, and 236–256; these read IFGL…LVAL, YFIW…ILIY, FVGI…IATY, LDLV…GNFL, PSQL…LLLI, GELI…CEFF, and IGFV…MFLL. Arg152 is a binding site for a 1,2-diacyl-sn-glycero-3-phospho-(1'-sn-glycerol).

This sequence belongs to the Lgt family.

It is found in the cell inner membrane. The catalysed reaction is L-cysteinyl-[prolipoprotein] + a 1,2-diacyl-sn-glycero-3-phospho-(1'-sn-glycerol) = an S-1,2-diacyl-sn-glyceryl-L-cysteinyl-[prolipoprotein] + sn-glycerol 1-phosphate + H(+). It participates in protein modification; lipoprotein biosynthesis (diacylglyceryl transfer). Functionally, catalyzes the transfer of the diacylglyceryl group from phosphatidylglycerol to the sulfhydryl group of the N-terminal cysteine of a prolipoprotein, the first step in the formation of mature lipoproteins. The chain is Phosphatidylglycerol--prolipoprotein diacylglyceryl transferase from Campylobacter lari (strain RM2100 / D67 / ATCC BAA-1060).